A 300-amino-acid polypeptide reads, in one-letter code: GTPase Era (300 aa).

One can recognise an Era-type G domain in the interval 7–175 (YCGFIAIVGR…EKFVRESLKE (169 aa)). The segment at 15–22 (GRPNVGKS) is G1. Residue 15-22 (GRPNVGKS) coordinates GTP. The tract at residues 41 to 45 (QTTRH) is G2. Residues 62–65 (DTPG) form a G3 region. Residues 62 to 66 (DTPGL) and 124 to 127 (NKVD) each bind GTP. Residues 124-127 (NKVD) form a G4 region. The G5 stretch occupies residues 154 to 156 (ISA). Residues 206-283 (MGEELPYSVT…HLELWVKVKA (78 aa)) enclose the KH type-2 domain.

The protein belongs to the TRAFAC class TrmE-Era-EngA-EngB-Septin-like GTPase superfamily. Era GTPase family. As to quaternary structure, monomer.

The protein localises to the cytoplasm. It is found in the cell inner membrane. In terms of biological role, an essential GTPase that binds both GDP and GTP, with rapid nucleotide exchange. Plays a role in 16S rRNA processing and 30S ribosomal subunit biogenesis and possibly also in cell cycle regulation and energy metabolism. The protein is GTPase Era of Glaesserella parasuis serovar 5 (strain SH0165) (Haemophilus parasuis).